We begin with the raw amino-acid sequence, 664 residues long: Protein-arginine deiminase type-3 (664 aa).

It belongs to the protein arginine deiminase family. It depends on Ca(2+) as a cofactor. Epidermis and hair follicles.

It is found in the cytoplasm. It catalyses the reaction L-arginyl-[protein] + H2O = L-citrullyl-[protein] + NH4(+). Functionally, catalyzes the deimination of arginine residues of proteins. This Mus musculus (Mouse) protein is Protein-arginine deiminase type-3 (Padi3).